Reading from the N-terminus, the 223-residue chain is Protein phosphatase 1 regulatory subunit 3C (223 aa).

In terms of domain architecture, CBM21 spans 104–209 (REQLTRKLVC…NNDGKNYSLH (106 aa)).

Interacts with PPP1CC catalytic subunit of PP1 and associates with glycogen. Forms complexes with glycogen phosphorylase, glycogen synthase and phosphorylase kinase which is necessary for its regulation of PP1 activity.

In terms of biological role, acts as a glycogen-targeting subunit for PP1 and regulates its activity. Activates glycogen synthase, reduces glycogen phosphorylase activity and limits glycogen breakdown. The protein is Protein phosphatase 1 regulatory subunit 3C of Xenopus tropicalis (Western clawed frog).